The primary structure comprises 690 residues: Proprotein convertase subtilisin/kexin type 9 (690 aa).

A signal peptide spans 1-28 (MGTVRSRRLWWPLPLLLLLLLGPAGARA). A propeptide spanning residues 29–150 (QEDDDGDYEE…IEEDSYVFAQ (122 aa)) is cleaved from the precursor. Tyr36 is modified (sulfotyrosine). Ser45 carries the phosphoserine modification. Positions 75–147 (TYVVVLKEET…VDYIEEDSYV (73 aa)) constitute an Inhibitor I9 domain. The 307-residue stretch at 153–459 (PWNLERITPA…GWQLFCRTVW (307 aa)) folds into the Peptidase S8 domain. Residues Asp184 and His224 each act as charge relay system in the active site. Cystine bridges form between Cys221–Cys253 and Cys321–Cys356. The active-site Charge relay system is Ser384. The interval 448–690 (GAGWQLFCRT…HLAQASQELQ (243 aa)) is C-terminal domain. 3 disulfides stabilise this stretch: Cys455/Cys525, Cys475/Cys524, and Cys484/Cys507. N-linked (GlcNAc...) asparagine glycosylation is present at Asn531. Disulfide bonds link Cys532–Cys599, Cys550–Cys598, Cys560–Cys586, Cys606–Cys677, Cys624–Cys676, and Cys633–Cys652. Ser686 bears the Phosphoserine mark.

Belongs to the peptidase S8 family. Monomer. Can self-associate to form dimers and higher multimers which may have increased LDLR degrading activity. The precursor protein but not the mature protein may form multimers. Interacts with APOB, VLDLR, LRP8/APOER2 and BACE1. The full-length immature form (pro-PCSK9) interacts with SCNN1A, SCNN1B and SCNN1G. The pro-PCSK9 form (via C-terminal domain) interacts with LDLR. Interacts (via the C-terminal domain) with ANXA2 (via repeat Annexin 1); the interaction inhibits the degradation of LDLR. Requires Ca(2+) as cofactor. Cleavage by furin and PCSK5 generates a truncated inactive protein that is unable to induce LDLR degradation. In terms of processing, undergoes autocatalytic cleavage in the endoplasmic reticulum to release the propeptide from the N-terminus and the cleavage of the propeptide is strictly required for its maturation and activation. The cleaved propeptide however remains associated with the catalytic domain through non-covalent interactions, preventing potential substrates from accessing its active site. As a result, it is secreted from cells as a propeptide-containing, enzymatically inactive protein. Post-translationally, phosphorylation protects the propeptide against proteolysis.

Its subcellular location is the cytoplasm. The protein localises to the secreted. It localises to the endosome. It is found in the lysosome. The protein resides in the cell surface. Its subcellular location is the endoplasmic reticulum. The protein localises to the golgi apparatus. Its proteolytic activity is autoinhibited by the non-covalent binding of the propeptide to the catalytic domain. Inhibited by EGTA. Functionally, crucial player in the regulation of plasma cholesterol homeostasis. Binds to low-density lipid receptor family members: low density lipoprotein receptor (LDLR), very low density lipoprotein receptor (VLDLR), apolipoprotein E receptor (LRP1/APOER) and apolipoprotein receptor 2 (LRP8/APOER2), and promotes their degradation in intracellular acidic compartments. Acts via a non-proteolytic mechanism to enhance the degradation of the hepatic LDLR through a clathrin LDLRAP1/ARH-mediated pathway. May prevent the recycling of LDLR from endosomes to the cell surface or direct it to lysosomes for degradation. Can induce ubiquitination of LDLR leading to its subsequent degradation. Inhibits intracellular degradation of APOB via the autophagosome/lysosome pathway in a LDLR-independent manner. Involved in the disposal of non-acetylated intermediates of BACE1 in the early secretory pathway. Inhibits epithelial Na(+) channel (ENaC)-mediated Na(+) absorption by reducing ENaC surface expression primarily by increasing its proteasomal degradation. Regulates neuronal apoptosis via modulation of LRP8/APOER2 levels and related anti-apoptotic signaling pathways. In Lagothrix lagotricha (Brown woolly monkey), this protein is Proprotein convertase subtilisin/kexin type 9 (PCSK9).